A 101-amino-acid polypeptide reads, in one-letter code: Movement protein (101 aa).

A helical transmembrane segment spans residues 30–50 (EVAILSFVALICFYLLYLWVL). The segment at 75–101 (VDRSNPIPNLPAPPSQGNPGPFVPGTG) is disordered.

Belongs to the mastrevirus movement protein family. In terms of assembly, interacts with the capsid protein (CP). Part of a MP-CP-viral DNA complex.

It is found in the host membrane. In terms of biological role, involved in the viral transport within, and between cells. The protein is Movement protein of Maize streak virus genotype A (isolate South Africa) (MSV).